A 64-amino-acid polypeptide reads, in one-letter code: MMFRLTSVSCFLLVIACLNLVVLTNACLRDGQSCGYDSDCCRYSCCWGYCDLTCLINGKRATFQ.

Positions 1–26 (MMFRLTSVSCFLLVIACLNLVVLTNA) are cleaved as a signal peptide. 4 disulfides stabilise this stretch: Cys-27/Cys-41, Cys-34/Cys-46, Cys-40/Cys-50, and Cys-45/Cys-54. Asn-57 carries the asparagine amide modification. The propeptide occupies 61–64 (ATFQ).

It belongs to the conotoxin I2 superfamily. As to expression, expressed by the venom duct.

Its subcellular location is the secreted. The polypeptide is Conotoxin Im11.1 (Conus imperialis (Imperial cone)).